The following is a 133-amino-acid chain: MAKEFGRPQRVAQEMQKEIAIILQREIKDPRLGMMTTVSGVEMSRDLAYAKVFVTFLNDKDEDAVKAGIKALQEASGFIRSLLGKAMRLRIVPELTFFYDNSLVEGMRMSNLVTNVVKHDEERRVNPDDSKED.

This sequence belongs to the RbfA family. As to quaternary structure, monomer. Binds 30S ribosomal subunits, but not 50S ribosomal subunits or 70S ribosomes.

It localises to the cytoplasm. Its function is as follows. One of several proteins that assist in the late maturation steps of the functional core of the 30S ribosomal subunit. Associates with free 30S ribosomal subunits (but not with 30S subunits that are part of 70S ribosomes or polysomes). Required for efficient processing of 16S rRNA. May interact with the 5'-terminal helix region of 16S rRNA. In Salmonella typhimurium (strain LT2 / SGSC1412 / ATCC 700720), this protein is Ribosome-binding factor A.